Here is a 264-residue protein sequence, read N- to C-terminus: Thymidylate synthase (264 aa).

A dUMP-binding site is contributed by R21. H51 contacts (6R)-5,10-methylene-5,6,7,8-tetrahydrofolate. DUMP is bound at residue 126–127; sequence RR. C146 functions as the Nucleophile in the catalytic mechanism. Residues 166–169, N177, and 207–209 each bind dUMP; these read RSAD and HIY. D169 lines the (6R)-5,10-methylene-5,6,7,8-tetrahydrofolate pocket. S263 lines the (6R)-5,10-methylene-5,6,7,8-tetrahydrofolate pocket.

The protein belongs to the thymidylate synthase family. Bacterial-type ThyA subfamily. In terms of assembly, homodimer.

Its subcellular location is the cytoplasm. The catalysed reaction is dUMP + (6R)-5,10-methylene-5,6,7,8-tetrahydrofolate = 7,8-dihydrofolate + dTMP. The protein operates within pyrimidine metabolism; dTTP biosynthesis. Catalyzes the reductive methylation of 2'-deoxyuridine-5'-monophosphate (dUMP) to 2'-deoxythymidine-5'-monophosphate (dTMP) while utilizing 5,10-methylenetetrahydrofolate (mTHF) as the methyl donor and reductant in the reaction, yielding dihydrofolate (DHF) as a by-product. This enzymatic reaction provides an intracellular de novo source of dTMP, an essential precursor for DNA biosynthesis. In Bacillus pumilus (strain SAFR-032), this protein is Thymidylate synthase.